Here is a 472-residue protein sequence, read N- to C-terminus: Trigger factor (472 aa).

One can recognise a PPIase FKBP-type domain in the interval G174 to P261. Residues E430–A472 form a disordered region. Residues A452–A464 show a composition bias toward basic residues.

The protein belongs to the FKBP-type PPIase family. Tig subfamily.

The protein resides in the cytoplasm. The catalysed reaction is [protein]-peptidylproline (omega=180) = [protein]-peptidylproline (omega=0). In terms of biological role, involved in protein export. Acts as a chaperone by maintaining the newly synthesized protein in an open conformation. Functions as a peptidyl-prolyl cis-trans isomerase. The polypeptide is Trigger factor (Parasynechococcus marenigrum (strain WH8102)).